The chain runs to 341 residues: Putative UPF0607 protein FLJ37424 (341 aa).

2 disordered regions span residues 72-131 (PKTE…NPRP) and 216-283 (GLLM…LPCL). A compositionally biased stretch (basic and acidic residues) spans 79–101 (EEPKEATEVKDQVETQGQEDNKR). Positions 108–127 (EAASTSRPLETQGNLTSSWY) are enriched in polar residues. The span at 243-252 (AGHRSHKRKL) shows a compositional bias: basic residues.

This sequence belongs to the UPF0607 family.

The sequence is that of Putative UPF0607 protein FLJ37424 from Homo sapiens (Human).